We begin with the raw amino-acid sequence, 325 residues long: Lipoyl synthase (325 aa).

Residues C68, C73, C79, C94, C98, C101, and S308 each coordinate [4Fe-4S] cluster. Residues 80 to 297 enclose the Radical SAM core domain; the sequence is FGGGTATFMI…ARVANELGFT (218 aa).

The protein belongs to the radical SAM superfamily. Lipoyl synthase family. The cofactor is [4Fe-4S] cluster.

Its subcellular location is the cytoplasm. It carries out the reaction [[Fe-S] cluster scaffold protein carrying a second [4Fe-4S](2+) cluster] + N(6)-octanoyl-L-lysyl-[protein] + 2 oxidized [2Fe-2S]-[ferredoxin] + 2 S-adenosyl-L-methionine + 4 H(+) = [[Fe-S] cluster scaffold protein] + N(6)-[(R)-dihydrolipoyl]-L-lysyl-[protein] + 4 Fe(3+) + 2 hydrogen sulfide + 2 5'-deoxyadenosine + 2 L-methionine + 2 reduced [2Fe-2S]-[ferredoxin]. It functions in the pathway protein modification; protein lipoylation via endogenous pathway; protein N(6)-(lipoyl)lysine from octanoyl-[acyl-carrier-protein]: step 2/2. Its function is as follows. Catalyzes the radical-mediated insertion of two sulfur atoms into the C-6 and C-8 positions of the octanoyl moiety bound to the lipoyl domains of lipoate-dependent enzymes, thereby converting the octanoylated domains into lipoylated derivatives. The chain is Lipoyl synthase from Alcanivorax borkumensis (strain ATCC 700651 / DSM 11573 / NCIMB 13689 / SK2).